Here is a 152-residue protein sequence, read N- to C-terminus: Xanthine-guanine phosphoribosyltransferase (152 aa).

5-phospho-alpha-D-ribose 1-diphosphate contacts are provided by residues 37-38 and 88-96; these read RG and DDLVDTGGT. Asp89 lines the Mg(2+) pocket. Guanine-binding residues include Asp92 and Ile135. The xanthine site is built by Asp92 and Ile135. Residues 92–96 and 134–135 each bind GMP; these read DTGGT and WI.

The protein belongs to the purine/pyrimidine phosphoribosyltransferase family. XGPT subfamily. As to quaternary structure, homotetramer. Requires Mg(2+) as cofactor.

The protein localises to the cell inner membrane. It carries out the reaction GMP + diphosphate = guanine + 5-phospho-alpha-D-ribose 1-diphosphate. The enzyme catalyses XMP + diphosphate = xanthine + 5-phospho-alpha-D-ribose 1-diphosphate. It catalyses the reaction IMP + diphosphate = hypoxanthine + 5-phospho-alpha-D-ribose 1-diphosphate. The protein operates within purine metabolism; GMP biosynthesis via salvage pathway; GMP from guanine: step 1/1. It functions in the pathway purine metabolism; XMP biosynthesis via salvage pathway; XMP from xanthine: step 1/1. Purine salvage pathway enzyme that catalyzes the transfer of the ribosyl-5-phosphate group from 5-phospho-alpha-D-ribose 1-diphosphate (PRPP) to the N9 position of the 6-oxopurines guanine and xanthine to form the corresponding ribonucleotides GMP (guanosine 5'-monophosphate) and XMP (xanthosine 5'-monophosphate), with the release of PPi. To a lesser extent, also acts on hypoxanthine. This Yersinia enterocolitica serotype O:8 / biotype 1B (strain NCTC 13174 / 8081) protein is Xanthine-guanine phosphoribosyltransferase.